Consider the following 513-residue polypeptide: MAEKEEKEPSKLKSSTGVSRPTISLPPRPFGEMFFSGGVGFSPGPMTLVSNLFSDPDEFKSFSQLLAGAMASPAAAAVAAAAVVATAHHQTPVSSVGDGGGSGGDVDPRFKQSRPTGLMITQPPGMFTVPPGLSPATLLDSPSFFGLFSPLQGTFGMTHQQALAQVTAQAVQGNNVHMQQSQQSEYPSSTQQQQQQQQQASLTEIPSFSSAPRSQIRASVQETSQGQRETSEISVFEHRSQPQNADKPADDGYNWRKYGQKQVKGSDFPRSYYKCTHPACPVKKKVERSLDGQVTEIIYKGQHNHELPQKRGNNNGSCKSSDIANQFQTSNSSLNKSKRDQETSQVTTTEQMSEASDSEEVGNAETSVGERHEDEPDPKRRNTEVRVSEPVASSHRTVTEPRIIVQTTSEVDLLDDGYRWRKYGQKVVKGNPYPRSYYKCTTPDCGVRKHVERAATDPKAVVTTYEGKHNHDVPAARTSSHQLRPNNQHNTSTVNFNHQQPVARLRLKEEQIT.

The segment covering 1-11 (MAEKEEKEPSK) has biased composition (basic and acidic residues). 3 disordered regions span residues 1 to 26 (MAEK…ISLP), 175 to 281 (NVHM…PACP), and 297 to 394 (IIYK…VASS). A compositionally biased stretch (low complexity) spans 179 to 201 (QQSQQSEYPSSTQQQQQQQQQAS). Residues 202–228 (LTEIPSFSSAPRSQIRASVQETSQGQR) show a composition bias toward polar residues. The segment covering 229-240 (ETSEISVFEHRS) has biased composition (basic and acidic residues). A DNA-binding region (WRKY 1) is located at residues 244-308 (NADKPADDGY…YKGQHNHELP (65 aa)). 2 stretches are compositionally biased toward polar residues: residues 311–335 (RGNN…SSLN) and 343–355 (TSQV…MSEA). The span at 368-387 (VGERHEDEPDPKRRNTEVRV) shows a compositional bias: basic and acidic residues. Residues 409 to 474 (SEVDLLDDGY…YEGKHNHDVP (66 aa)) constitute a DNA-binding region (WRKY 2).

In young, mature and senescent leaves.

It localises to the nucleus. Transcription factor. Interacts specifically with the W box (5'-(T)TGAC[CT]-3'), a frequently occurring elicitor-responsive cis-acting element. The protein is Probable WRKY transcription factor 3 (WRKY3) of Arabidopsis thaliana (Mouse-ear cress).